A 254-amino-acid chain; its full sequence is Phosphatidylglycerophosphatase B (254 aa).

The chain crosses the membrane as a helical span at residues 2 to 24; the sequence is RSIARRTAVGAALLLVMPVAVWI. Over 25 to 54 the chain is Periplasmic; it reads SGWRWQPGEQSWLLKAAFWVTETVTQPWGV. Residues 55–66 traverse the membrane as a helical segment; it reads ITHLILFGWFLW. Residues 67–71 are Cytoplasmic-facing; sequence CLRFR. Residues 72–94 form a helical membrane-spanning segment; that stretch reads IKAAFVLFAILAAAILVGQGVKS. Residues 95 to 161 are Periplasmic-facing; it reads WIKDKVQEPR…QKETGFAFPS (67 aa). The interval 97-105 is phosphatase sequence motif I; sequence KDKVQEPRP. The phosphatase sequence motif II stretch occupies residues 160-163; it reads PSGH. Residues 162-176 traverse the membrane as a helical segment; the sequence is GHTMFAASWALLAVG. H163 (proton donor; for a subset of substrates) is an active-site residue. At 177 to 182 the chain is on the cytoplasmic side; the sequence is LLWPRR. The helical transmembrane segment at 183–202 threads the bilayer; the sequence is RTLTIAILLVWATGVMGSRL. A phosphatase sequence motif III region spans residues 200 to 211; sequence SRLLLGMHWPRD. The Periplasmic portion of the chain corresponds to 203–208; sequence LLGMHW. Catalysis depends on H207, which acts as the Nucleophile. A helical membrane pass occupies residues 209-232; it reads PRDLVVATLISWALVAVATWLAQR. Over 233-254 the chain is Cytoplasmic; it reads ICGPLTPPAEENREIAQREQES.

This sequence belongs to the PA-phosphatase related phosphoesterase family. In terms of processing, the N-terminus is blocked.

Its subcellular location is the cell inner membrane. The protein localises to the cell outer membrane. It carries out the reaction a 1,2-diacyl-sn-glycero-3-phospho-(1'-sn-glycero-3'-phosphate) + H2O = a 1,2-diacyl-sn-glycero-3-phospho-(1'-sn-glycerol) + phosphate. It catalyses the reaction a 1,2-diacyl-sn-glycerol 3-diphosphate + H2O = a 1,2-diacyl-sn-glycero-3-phosphate + phosphate + H(+). The enzyme catalyses a 1,2-diacyl-sn-glycero-3-phosphate + H2O = a 1,2-diacyl-sn-glycerol + phosphate. The catalysed reaction is di-trans,octa-cis-undecaprenyl diphosphate + H2O = di-trans,octa-cis-undecaprenyl phosphate + phosphate + H(+). It participates in phospholipid metabolism; phosphatidylglycerol biosynthesis; phosphatidylglycerol from CDP-diacylglycerol: step 2/2. Catalyzes the dephosphorylation of diacylglycerol diphosphate (DGPP) to phosphatidate (PA) and the subsequent dephosphorylation of PA to diacylglycerol (DAG). Also has undecaprenyl pyrophosphate phosphatase activity, required for the biosynthesis of the lipid carrier undecaprenyl phosphate. Can also use lysophosphatidic acid (LPA) and phosphatidylglycerophosphate as substrates. The pattern of activities varies according to subcellular location, PGP phosphatase activity is higher in the cytoplasmic membrane, whereas PA and LPA phosphatase activities are higher in the outer membrane. Activity is independent of a divalent cation ion and insensitive to inhibition by N-ethylmaleimide. This chain is Phosphatidylglycerophosphatase B (pgpB), found in Escherichia coli O157:H7.